The chain runs to 417 residues: NADH-quinone oxidoreductase subunit D (417 aa).

Belongs to the complex I 49 kDa subunit family. In terms of assembly, NDH-1 is composed of 14 different subunits. Subunits NuoB, C, D, E, F, and G constitute the peripheral sector of the complex.

The protein resides in the cell inner membrane. It catalyses the reaction a quinone + NADH + 5 H(+)(in) = a quinol + NAD(+) + 4 H(+)(out). NDH-1 shuttles electrons from NADH, via FMN and iron-sulfur (Fe-S) centers, to quinones in the respiratory chain. The immediate electron acceptor for the enzyme in this species is believed to be ubiquinone. Couples the redox reaction to proton translocation (for every two electrons transferred, four hydrogen ions are translocated across the cytoplasmic membrane), and thus conserves the redox energy in a proton gradient. This Coxiella burnetii (strain Dugway 5J108-111) protein is NADH-quinone oxidoreductase subunit D.